The primary structure comprises 199 residues: Transgelin-3 (199 aa).

The region spanning Ala24–Ala136 is the Calponin-homology (CH) domain. Ser163 is modified (phosphoserine). One copy of the Calponin-like repeat lies at Ile174–Met199. A compositionally biased stretch (polar residues) spans Met178–Gly188. The interval Met178–Met199 is disordered.

Belongs to the calponin family.

This chain is Transgelin-3 (Tagln3), found in Mus musculus (Mouse).